The sequence spans 495 residues: Aspartyl/glutamyl-tRNA(Asn/Gln) amidotransferase subunit B (495 aa).

It belongs to the GatB/GatE family. GatB subfamily. As to quaternary structure, heterotrimer of A, B and C subunits.

The enzyme catalyses L-glutamyl-tRNA(Gln) + L-glutamine + ATP + H2O = L-glutaminyl-tRNA(Gln) + L-glutamate + ADP + phosphate + H(+). The catalysed reaction is L-aspartyl-tRNA(Asn) + L-glutamine + ATP + H2O = L-asparaginyl-tRNA(Asn) + L-glutamate + ADP + phosphate + 2 H(+). Its function is as follows. Allows the formation of correctly charged Asn-tRNA(Asn) or Gln-tRNA(Gln) through the transamidation of misacylated Asp-tRNA(Asn) or Glu-tRNA(Gln) in organisms which lack either or both of asparaginyl-tRNA or glutaminyl-tRNA synthetases. The reaction takes place in the presence of glutamine and ATP through an activated phospho-Asp-tRNA(Asn) or phospho-Glu-tRNA(Gln). The chain is Aspartyl/glutamyl-tRNA(Asn/Gln) amidotransferase subunit B from Methanosarcina acetivorans (strain ATCC 35395 / DSM 2834 / JCM 12185 / C2A).